The sequence spans 374 residues: UPF0496 protein At3g28270 (374 aa).

Positions 171–210 (KVLTTQFERIKKQQESLLEEVSETRKKIQDEISNLEKKTL) form a coiled coil. 2 helical membrane passes run 214-234 (VVFG…IATG) and 235-255 (VGAA…GWAG). The stretch at 256 to 321 (VYTTLDKKKD…MLKLVDNAID (66 aa)) forms a coiled coil.

The protein belongs to the UPF0496 family.

Its subcellular location is the membrane. The protein is UPF0496 protein At3g28270 of Arabidopsis thaliana (Mouse-ear cress).